The primary structure comprises 317 residues: Melanocyte-stimulating hormone receptor (317 aa).

Topologically, residues 1–37 (MPMQGAQRKLLGSLNSTPTATSNLGLAANHTGAPCLE) are extracellular. N29 carries N-linked (GlcNAc...) asparagine glycosylation. A helical transmembrane segment spans residues 38-63 (VSIPDGLFLSLGLVSLVENVLVVAAI). At 64–72 (AKNRNLHSS) the chain is on the cytoplasmic side. A helical membrane pass occupies residues 73 to 93 (MYCFICCLALSDLLVSGSNML). The Extracellular portion of the chain corresponds to 94-118 (ETAVILLLEAGALATRTSAVQRLHN). Residues 119-140 (TIDVLTCSSMLCSLCFLGAIAV) form a helical membrane-spanning segment. Over 141 to 163 (DRYISIFYALRYHSIVTLPRTQR) the chain is Cytoplasmic. Residues 164–183 (VIAAIWVASVLSSTLFITYY) form a helical membrane-spanning segment. Topologically, residues 184 to 191 (DHAAVLLC) are extracellular. A helical transmembrane segment spans residues 192–211 (LVVFFLAMLVLMAVLYVHML). The Cytoplasmic portion of the chain corresponds to 212–240 (ARACQHAHGIIRLHKRQSPAHQGFGLRGA). The helical transmembrane segment at 241-266 (ATLTILLGIFFLCWGPFFLHLTLVVF) threads the bilayer. Topologically, residues 267–279 (CPQHLTCSCIFKN) are extracellular. The chain crosses the membrane as a helical span at residues 280–300 (FKVFLTLIICNTIIDPLIYAF). The Cytoplasmic portion of the chain corresponds to 301-317 (RSQELRRTLKEVLLCSW). C315 carries the S-palmitoyl cysteine lipid modification.

It belongs to the G-protein coupled receptor 1 family. In terms of assembly, interacts with MGRN1, but does not undergo MGRN1-mediated ubiquitination; this interaction competes with GNAS-binding and thus inhibits agonist-induced cAMP production. Interacts with OPN3; the interaction results in a decrease in MC1R-mediated cAMP signaling and ultimately a decrease in melanin production in melanocytes.

The protein localises to the cell membrane. Receptor for MSH (alpha, beta and gamma) and ACTH. The activity of this receptor is mediated by G proteins which activate adenylate cyclase. Mediates melanogenesis, the production of eumelanin (black/brown) and phaeomelanin (red/yellow), via regulation of cAMP signaling in melanocytes. The sequence is that of Melanocyte-stimulating hormone receptor (MC1R) from Saguinus imperator (Emperor tamarin).